Consider the following 507-residue polypeptide: Cobyric acid synthase (507 aa).

The GATase cobBQ-type domain occupies Asp251 to Phe448. Cys332 acts as the Nucleophile in catalysis. His440 is a catalytic residue.

Belongs to the CobB/CobQ family. CobQ subfamily.

Its pathway is cofactor biosynthesis; adenosylcobalamin biosynthesis. In terms of biological role, catalyzes amidations at positions B, D, E, and G on adenosylcobyrinic A,C-diamide. NH(2) groups are provided by glutamine, and one molecule of ATP is hydrogenolyzed for each amidation. This is Cobyric acid synthase from Klebsiella pneumoniae subsp. pneumoniae (strain ATCC 700721 / MGH 78578).